The primary structure comprises 319 residues: Putative metal ion transporter YfjQ (319 aa).

A run of 2 helical transmembrane segments spans residues 254–274 (IMMT…IAGV) and 290–310 (GYFA…IWFV).

This sequence belongs to the CorA metal ion transporter (MIT) (TC 1.A.35) family.

It localises to the cell membrane. The polypeptide is Putative metal ion transporter YfjQ (yfjQ) (Bacillus subtilis (strain 168)).